A 265-amino-acid polypeptide reads, in one-letter code: Zearalenone hydrolase (265 aa).

Residues glycine 35, serine 105, and serine 106 each coordinate zearalenone. Serine 105 is a catalytic residue. Residue glutamate 129 is part of the active site. Zearalenone contacts are provided by tryptophan 185, tyrosine 189, and histidine 243. Histidine 243 is an active-site residue.

The protein belongs to the AB hydrolase superfamily. Hydrolase RutD family. In terms of assembly, homodimer.

It carries out the reaction zearalenone + H2O = hydrolyzed zearalenone + H(+). Lactonohydrolase that specifically hydrolyzes zearalenone (ZEN), an oestrogenic mycotoxin produced by numerous Fusarium specie, into a non-toxic alkylresorcinol product. The polypeptide is Zearalenone hydrolase (Cladophialophora bantiana (strain ATCC 10958 / CDC1940 / 8579 / CBS 173.52) (Xylohypha bantiana)).